The primary structure comprises 300 residues: GTPase Era (300 aa).

The Era-type G domain occupies 5 to 172; the sequence is HSGFVAIIGR…LTALTDALPV (168 aa). Positions 13 to 20 are G1; the sequence is GRPNVGKS. A GTP-binding site is contributed by 13–20; that stretch reads GRPNVGKS. Positions 39–43 are G2; sequence QTTRN. A G3 region spans residues 60–63; that stretch reads DTPG. GTP is bound by residues 60-64 and 122-125; these read DTPGI and NKID. The segment at 122–125 is G4; it reads NKID. The interval 151 to 153 is G5; the sequence is ISA. The 78-residue stretch at 203–280 folds into the KH type-2 domain; that stretch reads TRDEVPHAVA…NLKLWVRVQK (78 aa).

It belongs to the TRAFAC class TrmE-Era-EngA-EngB-Septin-like GTPase superfamily. Era GTPase family. In terms of assembly, monomer.

It localises to the cytoplasm. The protein localises to the cell membrane. In terms of biological role, an essential GTPase that binds both GDP and GTP, with rapid nucleotide exchange. Plays a role in 16S rRNA processing and 30S ribosomal subunit biogenesis and possibly also in cell cycle regulation and energy metabolism. This chain is GTPase Era, found in Lacticaseibacillus paracasei (strain ATCC 334 / BCRC 17002 / CCUG 31169 / CIP 107868 / KCTC 3260 / NRRL B-441) (Lactobacillus paracasei).